The following is a 541-amino-acid chain: Tyrosine-protein kinase Yes (541 aa).

G2 carries the N-myristoyl glycine lipid modification. The S-palmitoyl cysteine; in membrane form moiety is linked to residue C3. Y32 carries the phosphotyrosine modification. Positions 89 to 150 (GGVTIFVALY…PSNYVVPADS (62 aa)) constitute an SH3 domain. One can recognise an SH2 domain in the interval 156 to 253 (WYFGKMGRKD…GLCHKLTTVC (98 aa)). Positions 275 to 528 (LRLEVKLGQG…YIQSFLEDYF (254 aa)) constitute a Protein kinase domain. ATP is bound by residues 281-289 (LGQGCFGEV) and K303. Phosphotyrosine occurs at positions 334 and 343. The active-site Proton acceptor is the D394. Phosphotyrosine; by autocatalysis is present on Y424. Y535 carries the post-translational modification Phosphotyrosine.

Belongs to the protein kinase superfamily. Tyr protein kinase family. SRC subfamily. Interacts with YAP1. Interacts with FASLG. Interacts with CTNND1; this interaction allows YES1-mediated activation of FYN and FER and subsequent phosphorylation of CTNND1. Interacts with CSF1R. Interacts with IL6ST/gp130. Interacts with SCRIB, when YES1 is in a closed conformation; the interaction facilitates YES1 autophosphorylation. In terms of processing, phosphorylated. Phosphorylation by CSK on the C-terminal tail maintains the enzyme in an inactive state. Autophosphorylation at Tyr-424 maintains enzyme activity by blocking CSK-mediated inhibition. Post-translationally, palmitoylation at Cys-3 promotes membrane localization.

It localises to the cell membrane. The protein localises to the cytoplasm. The protein resides in the cytoskeleton. It is found in the microtubule organizing center. Its subcellular location is the centrosome. It localises to the cytosol. The protein localises to the cell junction. It carries out the reaction L-tyrosyl-[protein] + ATP = O-phospho-L-tyrosyl-[protein] + ADP + H(+). Its function is as follows. Non-receptor protein tyrosine kinase that is involved in the regulation of cell growth and survival, apoptosis, cell-cell adhesion, cytoskeleton remodeling, and differentiation. Stimulation by receptor tyrosine kinases (RTKs) including EGFR, PDGFR, CSF1R and FGFR leads to recruitment of YES1 to the phosphorylated receptor, and activation and phosphorylation of downstream substrates. Upon EGFR activation, promotes the phosphorylation of PARD3 to favor epithelial tight junction assembly. Participates in the phosphorylation of specific junctional components such as CTNND1 by stimulating the FYN and FER tyrosine kinases at cell-cell contacts. Upon T-cell stimulation by CXCL12, phosphorylates collapsin response mediator protein 2/DPYSL2 and induces T-cell migration. Participates in CD95L/FASLG signaling pathway and mediates AKT-mediated cell migration. Plays a role in cell cycle progression by phosphorylating the cyclin dependent kinase 4/CDK4 thus regulating the G1 phase. Also involved in G2/M progression and cytokinesis. Catalyzes phosphorylation of organic cation transporter OCT2 which induces its transport activity. This chain is Tyrosine-protein kinase Yes (Yes1), found in Mus musculus (Mouse).